We begin with the raw amino-acid sequence, 100 residues long: Ferredoxin-2 (100 aa).

One can recognise a 2Fe-2S ferredoxin-type domain in the interval 4 to 97; sequence YKVTLINEEE…DCTIMTHQES (94 aa). Residues cysteine 42, cysteine 47, cysteine 50, and cysteine 81 each contribute to the [2Fe-2S] cluster site.

It belongs to the 2Fe2S plant-type ferredoxin family. It depends on [2Fe-2S] cluster as a cofactor.

Its function is as follows. Ferredoxins are iron-sulfur proteins that transfer electrons in a wide variety of metabolic reactions. The protein is Ferredoxin-2 of Aphanothece sacrum.